The primary structure comprises 423 residues: Protein SOSEKI 5 (423 aa).

The tract at residues methionine 1–isoleucine 33 is disordered. The segment covering arginine 19–isoleucine 33 has biased composition (basic and acidic residues). The interval arginine 45 to aspartate 136 is DIX-like oligomerization domain. Disordered stretches follow at residues serine 150–isoleucine 172 and serine 196–threonine 258. Residues serine 196–glutamine 211 show a composition bias toward polar residues. 2 consecutive short sequence motifs (association to cell membranes) follow at residues alanine 233–serine 234 and cysteine 303–glycine 304. Residues serine 379 to glutamine 423 form a disordered region. Basic residues predominate over residues cysteine 406–alanine 415.

The protein belongs to the SOSEKI family. As to quaternary structure, homodimer. Forms long polymer filaments with other SOKs proteins polymers (e.g. SOK1, SOK2, SOK3 and SOK4) crucial for polar localization and biological activity. Binds to ANGUSTIFOLIA (AN). In terms of tissue distribution, expressed during embryogenesis and in roots.

Its subcellular location is the cell membrane. In terms of biological role, SOSEKI proteins (SOK1-5) locally interpret global polarity cues and can influence cell division orientation to coordinate cell polarization relative to body axes. This chain is Protein SOSEKI 5, found in Arabidopsis thaliana (Mouse-ear cress).